A 530-amino-acid chain; its full sequence is Bifunctional purine biosynthesis protein PurH (530 aa).

Positions 1–148 constitute an MGS-like domain; the sequence is MNNARPIRRA…KNHKDVTIVV (148 aa).

The protein belongs to the PurH family.

It catalyses the reaction (6R)-10-formyltetrahydrofolate + 5-amino-1-(5-phospho-beta-D-ribosyl)imidazole-4-carboxamide = 5-formamido-1-(5-phospho-D-ribosyl)imidazole-4-carboxamide + (6S)-5,6,7,8-tetrahydrofolate. It carries out the reaction IMP + H2O = 5-formamido-1-(5-phospho-D-ribosyl)imidazole-4-carboxamide. It participates in purine metabolism; IMP biosynthesis via de novo pathway; 5-formamido-1-(5-phospho-D-ribosyl)imidazole-4-carboxamide from 5-amino-1-(5-phospho-D-ribosyl)imidazole-4-carboxamide (10-formyl THF route): step 1/1. Its pathway is purine metabolism; IMP biosynthesis via de novo pathway; IMP from 5-formamido-1-(5-phospho-D-ribosyl)imidazole-4-carboxamide: step 1/1. The protein is Bifunctional purine biosynthesis protein PurH of Vibrio parahaemolyticus serotype O3:K6 (strain RIMD 2210633).